The sequence spans 23 residues: Hemocyanin subunit 4 (23 aa).

This sequence belongs to the tyrosinase family. Hemocyanin subfamily. In terms of tissue distribution, hemolymph.

It localises to the secreted. It is found in the extracellular space. Functionally, hemocyanins are copper-containing oxygen carriers occurring freely dissolved in the hemolymph of many mollusks and arthropods. The sequence is that of Hemocyanin subunit 4 from Carcinus maenas (Common shore crab).